The sequence spans 234 residues: Large ribosomal subunit protein uL1 (234 aa).

This sequence belongs to the universal ribosomal protein uL1 family. As to quaternary structure, part of the 50S ribosomal subunit.

In terms of biological role, binds directly to 23S rRNA. The L1 stalk is quite mobile in the ribosome, and is involved in E site tRNA release. Its function is as follows. Protein L1 is also a translational repressor protein, it controls the translation of the L11 operon by binding to its mRNA. The protein is Large ribosomal subunit protein uL1 of Salmonella gallinarum (strain 287/91 / NCTC 13346).